We begin with the raw amino-acid sequence, 206 residues long: LexA repressor (206 aa).

The segment at residues 28 to 48 (VREIGEAVGLASSSTVHGHLD) is a DNA-binding region (H-T-H motif). Catalysis depends on for autocatalytic cleavage activity residues Ser128 and Lys166.

It belongs to the peptidase S24 family. As to quaternary structure, homodimer.

It catalyses the reaction Hydrolysis of Ala-|-Gly bond in repressor LexA.. Its function is as follows. Represses a number of genes involved in the response to DNA damage (SOS response), including recA and lexA. In the presence of single-stranded DNA, RecA interacts with LexA causing an autocatalytic cleavage which disrupts the DNA-binding part of LexA, leading to derepression of the SOS regulon and eventually DNA repair. The chain is LexA repressor from Exiguobacterium sp. (strain ATCC BAA-1283 / AT1b).